Consider the following 284-residue polypeptide: NADPH-dependent 7-cyano-7-deazaguanine reductase (284 aa).

91-93 (IES) provides a ligand contact to substrate. 93-94 (SK) contributes to the NADPH binding site. Cysteine 192 serves as the catalytic Thioimide intermediate. The active-site Proton donor is aspartate 199. 231–232 (HE) contributes to the substrate binding site. An NADPH-binding site is contributed by 260–261 (RG).

It belongs to the GTP cyclohydrolase I family. QueF type 2 subfamily. In terms of assembly, homodimer.

It is found in the cytoplasm. It carries out the reaction 7-aminomethyl-7-carbaguanine + 2 NADP(+) = 7-cyano-7-deazaguanine + 2 NADPH + 3 H(+). Its pathway is tRNA modification; tRNA-queuosine biosynthesis. Catalyzes the NADPH-dependent reduction of 7-cyano-7-deazaguanine (preQ0) to 7-aminomethyl-7-deazaguanine (preQ1). This chain is NADPH-dependent 7-cyano-7-deazaguanine reductase, found in Shewanella denitrificans (strain OS217 / ATCC BAA-1090 / DSM 15013).